The following is a 237-amino-acid chain: Uridylate kinase (237 aa).

9–12 (KLSG) is a binding site for ATP. The interval 17–22 (GTQGYG) is involved in allosteric activation by GTP. Gly-51 contacts UMP. Gly-52 and Arg-56 together coordinate ATP. Residues Asp-71 and 132–139 (CGNPFFTT) each bind UMP. ATP contacts are provided by Thr-159, Tyr-165, and Asp-168.

It belongs to the UMP kinase family. As to quaternary structure, homohexamer.

The protein localises to the cytoplasm. The enzyme catalyses UMP + ATP = UDP + ADP. It participates in pyrimidine metabolism; CTP biosynthesis via de novo pathway; UDP from UMP (UMPK route): step 1/1. With respect to regulation, allosterically activated by GTP. Inhibited by UTP. Its function is as follows. Catalyzes the reversible phosphorylation of UMP to UDP. The protein is Uridylate kinase of Parasynechococcus marenigrum (strain WH8102).